The chain runs to 152 residues: Transcriptional regulator MraZ (152 aa).

SpoVT-AbrB domains lie at 5–52 (AHAI…PLCE) and 81–124 (ASEC…SETR).

Belongs to the MraZ family. In terms of assembly, forms oligomers.

Its subcellular location is the cytoplasm. It localises to the nucleoid. The chain is Transcriptional regulator MraZ from Tolumonas auensis (strain DSM 9187 / NBRC 110442 / TA 4).